Reading from the N-terminus, the 362-residue chain is Sulfate/thiosulfate import ATP-binding protein CysA (362 aa).

The region spanning 3–237 (IEINNISKYF…PASRFVMEFL (235 aa)) is the ABC transporter domain. 35 to 42 (GPSGSGKT) lines the ATP pocket.

It belongs to the ABC transporter superfamily. Sulfate/tungstate importer (TC 3.A.1.6) family. In terms of assembly, the complex is composed of two ATP-binding proteins (CysA), two transmembrane proteins (CysT and CysW) and a solute-binding protein (CysP).

The protein localises to the cell inner membrane. The enzyme catalyses sulfate(out) + ATP + H2O = sulfate(in) + ADP + phosphate + H(+). It carries out the reaction thiosulfate(out) + ATP + H2O = thiosulfate(in) + ADP + phosphate + H(+). Functionally, part of the ABC transporter complex CysAWTP involved in sulfate/thiosulfate import. Responsible for energy coupling to the transport system. This Photorhabdus laumondii subsp. laumondii (strain DSM 15139 / CIP 105565 / TT01) (Photorhabdus luminescens subsp. laumondii) protein is Sulfate/thiosulfate import ATP-binding protein CysA.